Reading from the N-terminus, the 107-residue chain is L-amino-acid oxidase (107 aa).

An FAD-binding site is contributed by 35 to 38 (GPMR). 2 residues coordinate substrate: R38 and H49.

Belongs to the flavin monoamine oxidase family. FIG1 subfamily. In terms of assembly, homodimer; non-covalently linked. The cofactor is FAD. N-glycosylated. In terms of tissue distribution, expressed by the venom gland.

It localises to the secreted. The enzyme catalyses an L-alpha-amino acid + O2 + H2O = a 2-oxocarboxylate + H2O2 + NH4(+). It carries out the reaction L-leucine + O2 + H2O = 4-methyl-2-oxopentanoate + H2O2 + NH4(+). The catalysed reaction is L-phenylalanine + O2 + H2O = 3-phenylpyruvate + H2O2 + NH4(+). It catalyses the reaction L-tryptophan + O2 + H2O = indole-3-pyruvate + H2O2 + NH4(+). The enzyme catalyses L-methionine + O2 + H2O = 4-methylsulfanyl-2-oxobutanoate + H2O2 + NH4(+). It carries out the reaction L-isoleucine + O2 + H2O = (S)-3-methyl-2-oxopentanoate + H2O2 + NH4(+). The catalysed reaction is L-arginine + O2 + H2O = 5-guanidino-2-oxopentanoate + H2O2 + NH4(+). It catalyses the reaction L-histidine + O2 + H2O = 3-(imidazol-5-yl)pyruvate + H2O2 + NH4(+). Functionally, catalyzes an oxidative deamination of predominantly hydrophobic and aromatic L-amino acids, thus producing hydrogen peroxide that may contribute to the diverse toxic effects of this enzyme. Shows high activity on L-Met, moderate activity on L-Trp, L-Leu, L-His, L-Phe, L-Arg, L-Ile, low activity on L-Val, L-Glu, L-Lys, L-Gln, L-Asn, L-Tyr, L-Ala, and no activity on L-Asp, L-Ser, L-Pro, L-Gly, L-Thr and L-Cys. Shows antimicrobial activity inhibiting the growth of both Gram-negative and Gram-positive bacteria. Also inhibits platelet aggregation induced by ADP or collagen. Effects of snake L-amino oxidases on platelets are controversial, since they either induce aggregation or inhibit agonist-induced aggregation. These different effects are probably due to different experimental conditions. This protein may also induce hemorrhage, hemolysis, edema, apoptosis, and have antiparasitic activities. This Macrovipera lebetinus (Levantine viper) protein is L-amino-acid oxidase.